The chain runs to 92 residues: Putative pterin-4-alpha-carbinolamine dehydratase (92 aa).

This sequence belongs to the pterin-4-alpha-carbinolamine dehydratase family.

It catalyses the reaction (4aS,6R)-4a-hydroxy-L-erythro-5,6,7,8-tetrahydrobiopterin = (6R)-L-erythro-6,7-dihydrobiopterin + H2O. The chain is Putative pterin-4-alpha-carbinolamine dehydratase from Picosynechococcus sp. (strain ATCC 27264 / PCC 7002 / PR-6) (Agmenellum quadruplicatum).